Consider the following 121-residue polypeptide: Ribonuclease P protein component (121 aa).

This sequence belongs to the RnpA family. As to quaternary structure, consists of a catalytic RNA component (M1 or rnpB) and a protein subunit.

It carries out the reaction Endonucleolytic cleavage of RNA, removing 5'-extranucleotides from tRNA precursor.. Functionally, RNaseP catalyzes the removal of the 5'-leader sequence from pre-tRNA to produce the mature 5'-terminus. It can also cleave other RNA substrates such as 4.5S RNA. The protein component plays an auxiliary but essential role in vivo by binding to the 5'-leader sequence and broadening the substrate specificity of the ribozyme. This chain is Ribonuclease P protein component, found in Lactobacillus delbrueckii subsp. bulgaricus (strain ATCC 11842 / DSM 20081 / BCRC 10696 / JCM 1002 / NBRC 13953 / NCIMB 11778 / NCTC 12712 / WDCM 00102 / Lb 14).